The primary structure comprises 177 residues: Endoribonuclease YbeY (177 aa).

Positions 142, 146, and 152 each coordinate Zn(2+).

Belongs to the endoribonuclease YbeY family. The cofactor is Zn(2+).

The protein localises to the cytoplasm. Its function is as follows. Single strand-specific metallo-endoribonuclease involved in late-stage 70S ribosome quality control and in maturation of the 3' terminus of the 16S rRNA. In Synechococcus sp. (strain CC9311), this protein is Endoribonuclease YbeY.